The primary structure comprises 181 residues: MPFPLPLNFPKWLSENEHLLQPPVGNFCLFRTRDYTVMAVGGPNARSDYHYQPTEEFFYQYKGDMLLKVIDEDGKFQDIPIKQGEMFMLPAHTPHSPVRFANTVGIVVERTRPDGSPDAMRWYCPNKEAHGETPTLVKEVHFQCTDLGTQLKPIIDAWVNDEAGRQCSHCGYTQGARELPA.

Arg46 is a binding site for O2. Residues His50, Glu56, and His95 each coordinate Fe cation. Residue Glu56 participates in substrate binding. Substrate contacts are provided by Arg99 and Glu109.

This sequence belongs to the 3-HAO family. Fe(2+) is required as a cofactor.

The protein localises to the cytoplasm. The enzyme catalyses 3-hydroxyanthranilate + O2 = (2Z,4Z)-2-amino-3-carboxymuconate 6-semialdehyde. Its pathway is cofactor biosynthesis; NAD(+) biosynthesis; quinolinate from L-kynurenine: step 3/3. Catalyzes the oxidative ring opening of 3-hydroxyanthranilate to 2-amino-3-carboxymuconate semialdehyde, which spontaneously cyclizes to quinolinate. The chain is 3-hydroxyanthranilate 3,4-dioxygenase from Mycosarcoma maydis (Corn smut fungus).